The primary structure comprises 249 residues: Type III pantothenate kinase (249 aa).

Residue 6–13 coordinates ATP; sequence DCGNSFIK. Substrate-binding positions include Tyr-93 and 100 to 103; that span reads GLDR. Asp-102 functions as the Proton acceptor in the catalytic mechanism. Asp-122 serves as a coordination point for K(+). An ATP-binding site is contributed by Thr-125. Thr-181 provides a ligand contact to substrate.

Belongs to the type III pantothenate kinase family. In terms of assembly, homodimer. It depends on NH4(+) as a cofactor. K(+) is required as a cofactor.

It is found in the cytoplasm. The enzyme catalyses (R)-pantothenate + ATP = (R)-4'-phosphopantothenate + ADP + H(+). It functions in the pathway cofactor biosynthesis; coenzyme A biosynthesis; CoA from (R)-pantothenate: step 1/5. Its function is as follows. Catalyzes the phosphorylation of pantothenate (Pan), the first step in CoA biosynthesis. The chain is Type III pantothenate kinase from Pseudomonas savastanoi pv. phaseolicola (strain 1448A / Race 6) (Pseudomonas syringae pv. phaseolicola (strain 1448A / Race 6)).